We begin with the raw amino-acid sequence, 390 residues long: S-adenosylmethionine synthase 1 (390 aa).

E9 contributes to the Mg(2+) binding site. H15 serves as a coordination point for ATP. E43 is a binding site for K(+). The L-methionine site is built by E56 and Q99. ATP-binding positions include 167-169 (DGK), 235-238 (SGRF), D246, 252-253 (RK), A269, K273, and K277. D246 contacts L-methionine. K277 contributes to the L-methionine binding site.

It belongs to the AdoMet synthase family. Homotetramer. Mn(2+) serves as cofactor. Requires Mg(2+) as cofactor. It depends on Co(2+) as a cofactor. The cofactor is K(+).

Its subcellular location is the cytoplasm. The catalysed reaction is L-methionine + ATP + H2O = S-adenosyl-L-methionine + phosphate + diphosphate. Its pathway is amino-acid biosynthesis; S-adenosyl-L-methionine biosynthesis; S-adenosyl-L-methionine from L-methionine: step 1/1. In terms of biological role, catalyzes the formation of S-adenosylmethionine from methionine and ATP. The reaction comprises two steps that are both catalyzed by the same enzyme: formation of S-adenosylmethionine (AdoMet) and triphosphate, and subsequent hydrolysis of the triphosphate. This Petunia hybrida (Petunia) protein is S-adenosylmethionine synthase 1 (SAM1).